The primary structure comprises 237 residues: MQFPSLSCGILIKRYKRFLADILLPNGEQITLHCPNTGAMTGCATTGDTVWFSTSDNPKRKYAHTWELTQTQAGDFICVNTQRANQLVQEALEKRWIAELAEYQTVLPEQKYGSENSRIDFLLKADNQPDCFAEVKSTTLLTENDLGMFPDAKTERGQKHLRELAAIAESGQQAVILFAILHTGIQRFAVAKQIDPQYAALFEQAKNVGVKVLAYKAQIELVLGKPISMNLQFSCEI.

It belongs to the SfsA family.

The chain is Sugar fermentation stimulation protein homolog from Actinobacillus pleuropneumoniae serotype 5b (strain L20).